The sequence spans 428 residues: Serine--tRNA ligase (428 aa).

Residue 235-237 (TAE) participates in L-serine binding. Position 266–268 (266–268 (RSE)) interacts with ATP. Glu-289 is a binding site for L-serine. 353–356 (EISS) contributes to the ATP binding site. Ser-389 is a binding site for L-serine.

It belongs to the class-II aminoacyl-tRNA synthetase family. Type-1 seryl-tRNA synthetase subfamily. In terms of assembly, homodimer. The tRNA molecule binds across the dimer.

Its subcellular location is the cytoplasm. It catalyses the reaction tRNA(Ser) + L-serine + ATP = L-seryl-tRNA(Ser) + AMP + diphosphate + H(+). The enzyme catalyses tRNA(Sec) + L-serine + ATP = L-seryl-tRNA(Sec) + AMP + diphosphate + H(+). It functions in the pathway aminoacyl-tRNA biosynthesis; selenocysteinyl-tRNA(Sec) biosynthesis; L-seryl-tRNA(Sec) from L-serine and tRNA(Sec): step 1/1. Functionally, catalyzes the attachment of serine to tRNA(Ser). Is also able to aminoacylate tRNA(Sec) with serine, to form the misacylated tRNA L-seryl-tRNA(Sec), which will be further converted into selenocysteinyl-tRNA(Sec). The protein is Serine--tRNA ligase of Shewanella halifaxensis (strain HAW-EB4).